A 353-amino-acid polypeptide reads, in one-letter code: Photosystem II protein D1 (353 aa).

At threonine 2 the chain carries N-acetylthreonine. Threonine 2 carries the post-translational modification Phosphothreonine. 3 consecutive transmembrane segments (helical) span residues 29-46, 118-133, and 142-156; these read YIGW…TATS, HFLL…EWEL, and WIAV…AATA. Histidine 118 provides a ligand contact to chlorophyll a. Pheophytin a is bound at residue tyrosine 126. [CaMn4O5] cluster-binding residues include aspartate 170 and glutamate 189. The chain crosses the membrane as a helical span at residues 197-218; that stretch reads FHMLGVAGVFGGSLFSAMHGSL. Histidine 198 lines the chlorophyll a pocket. A quinone-binding positions include histidine 215 and 264-265; that span reads SF. Fe cation is bound at residue histidine 215. Residue histidine 272 coordinates Fe cation. Residues 274-288 traverse the membrane as a helical segment; it reads FLAAWPVVGIWFTAL. Residues histidine 332, glutamate 333, aspartate 342, and alanine 344 each coordinate [CaMn4O5] cluster. The propeptide occupies 345 to 353; that stretch reads AVEVPSING.

This sequence belongs to the reaction center PufL/M/PsbA/D family. PSII is composed of 1 copy each of membrane proteins PsbA, PsbB, PsbC, PsbD, PsbE, PsbF, PsbH, PsbI, PsbJ, PsbK, PsbL, PsbM, PsbT, PsbX, PsbY, PsbZ, Psb30/Ycf12, at least 3 peripheral proteins of the oxygen-evolving complex and a large number of cofactors. It forms dimeric complexes. The cofactor is The D1/D2 heterodimer binds P680, chlorophylls that are the primary electron donor of PSII, and subsequent electron acceptors. It shares a non-heme iron and each subunit binds pheophytin, quinone, additional chlorophylls, carotenoids and lipids. D1 provides most of the ligands for the Mn4-Ca-O5 cluster of the oxygen-evolving complex (OEC). There is also a Cl(-1) ion associated with D1 and D2, which is required for oxygen evolution. The PSII complex binds additional chlorophylls, carotenoids and specific lipids.. Post-translationally, tyr-161 forms a radical intermediate that is referred to as redox-active TyrZ, YZ or Y-Z. C-terminally processed by CTPA; processing is essential to allow assembly of the oxygen-evolving complex and thus photosynthetic growth.

Its subcellular location is the plastid. It localises to the chloroplast thylakoid membrane. The enzyme catalyses 2 a plastoquinone + 4 hnu + 2 H2O = 2 a plastoquinol + O2. In terms of biological role, photosystem II (PSII) is a light-driven water:plastoquinone oxidoreductase that uses light energy to abstract electrons from H(2)O, generating O(2) and a proton gradient subsequently used for ATP formation. It consists of a core antenna complex that captures photons, and an electron transfer chain that converts photonic excitation into a charge separation. The D1/D2 (PsbA/PsbD) reaction center heterodimer binds P680, the primary electron donor of PSII as well as several subsequent electron acceptors. In Cucumis sativus (Cucumber), this protein is Photosystem II protein D1.